Here is a 32-residue protein sequence, read N- to C-terminus: Dermatoxin-J3 (32 aa).

The residue at position 32 (Gln-32) is a Glutamine amide.

Expressed by the skin glands.

Its subcellular location is the secreted. Its function is as follows. Antimicrobial peptide. This chain is Dermatoxin-J3, found in Phasmahyla jandaia (Jandaia leaf frog).